A 280-amino-acid chain; its full sequence is Elongation factor Ts (280 aa).

Residues 79–82 (TDFV) are involved in Mg(2+) ion dislocation from EF-Tu.

This sequence belongs to the EF-Ts family.

The protein resides in the cytoplasm. In terms of biological role, associates with the EF-Tu.GDP complex and induces the exchange of GDP to GTP. It remains bound to the aminoacyl-tRNA.EF-Tu.GTP complex up to the GTP hydrolysis stage on the ribosome. This is Elongation factor Ts from Vibrio cholerae serotype O1 (strain ATCC 39541 / Classical Ogawa 395 / O395).